We begin with the raw amino-acid sequence, 534 residues long: Thromboxane-A synthase (534 aa).

Residues 1-10 (MEVLGFLSPE) are Cytoplasmic-facing. Residues 11 to 31 (LNGPMVTMALAVVLLALLKWY) traverse the membrane as a helical segment. Topologically, residues 32 to 75 (STSAFSRLEKLGIRHPKPSPFIGNLTFFRQGFWESHMELRKQYG) are lumenal. A helical membrane pass occupies residues 76–96 (PLSGYYLGRRMIVVISDPDMI). Over 97–223 (KQVLAEKFSN…RRFFAFSVPR (127 aa)) the chain is Cytoplasmic. Residues 224–244 (LILVLILSFPSIMVPLARILP) traverse the membrane as a helical segment. Topologically, residues 245–336 (NKKRDEVNGF…LTVDEVVGQA (92 aa)) are lumenal. A helical transmembrane segment spans residues 337–357 (FLFLIAGYEIITNTLSFVTYL). Residues 358–534 (LATNPDCQEK…NGVYIRIVPR (177 aa)) are Cytoplasmic-facing. C480 provides a ligand contact to heme.

This sequence belongs to the cytochrome P450 family. In terms of assembly, monomer. Requires heme as cofactor. Expressed in lung, kidney and thymus.

It localises to the endoplasmic reticulum membrane. It carries out the reaction prostaglandin H2 = thromboxane A2. The enzyme catalyses prostaglandin H2 = (12S)-hydroxy-(5Z,8E,10E)-heptadecatrienoate + malonaldehyde. The catalysed reaction is a hydroperoxyeicosatetraenoate = an oxoeicosatetraenoate + H2O. It catalyses the reaction (15S)-hydroperoxy-(5Z,8Z,11Z,13E)-eicosatetraenoate = 15-oxo-(5Z,8Z,11Z,13E)-eicosatetraenoate + H2O. It carries out the reaction (15S)-hydroperoxy-(5Z,8Z,11Z,13E)-eicosatetraenoate + AH2 = (15S)-hydroxy-(5Z,8Z,11Z,13E)-eicosatetraenoate + A + H2O. In terms of biological role, catalyzes the conversion of prostaglandin H2 (PGH2) to thromboxane A2 (TXA2), a potent inducer of blood vessel constriction and platelet aggregation. Also cleaves PGH2 to 12-hydroxy-heptadecatrienoicacid (12-HHT) and malondialdehyde, which is known to act as a mediator of DNA damage. 12-HHT and malondialdehyde are formed stoichiometrically in the same amounts as TXA2. Additionally, displays dehydratase activity, toward (15S)-hydroperoxy-(5Z,8Z,11Z,13E)-eicosatetraenoate (15(S)-HPETE) producing 15-KETE and 15-HETE. The chain is Thromboxane-A synthase (TBXAS1) from Sus scrofa (Pig).